We begin with the raw amino-acid sequence, 422 residues long: Probable alpha-1,6-mannosyltransferase MNN11 (422 aa).

The Cytoplasmic portion of the chain corresponds to Met1 to Lys31. The chain crosses the membrane as a helical; Signal-anchor for type II membrane protein span at residues Tyr32–Ser52. The Lumenal segment spans residues Asn53–Ser422.

It belongs to the glycosyltransferase 34 family. In terms of assembly, component of the M-Pol II complex composed of ANP1, MNN9, MNN10, MNN11 and HOC1.

The protein localises to the golgi apparatus. It localises to the cis-Golgi network membrane. Its function is as follows. Required for synthesis of full-length mannan chains. Functionally, the M-Pol II complex possesses alpha-1,6-mannosyltransferase activity and is probably involved in the elongation of the mannan backbone of N-linked glycans on cell wall and periplasmic proteins. This is Probable alpha-1,6-mannosyltransferase MNN11 (MNN11) from Saccharomyces cerevisiae (strain ATCC 204508 / S288c) (Baker's yeast).